A 362-amino-acid polypeptide reads, in one-letter code: Prostaglandin F2-alpha receptor (362 aa).

Residues Met1–Ser31 are Extracellular-facing. Asn4 and Asn19 each carry an N-linked (GlcNAc...) asparagine glycan. The helical transmembrane segment at Phe32–Ala54 threads the bilayer. The Cytoplasmic portion of the chain corresponds to Tyr55–Leu69. Residues Ala70–Phe90 form a helical membrane-spanning segment. The Extracellular portion of the chain corresponds to Val91–Ser109. The cysteines at positions 108 and 186 are disulfide-linked. Residues Ile110 to Ile131 form a helical membrane-spanning segment. Residues Glu132–Val152 lie on the Cytoplasmic side of the membrane. A helical transmembrane segment spans residues Lys153–Arg175. Residues Asp176–Asp198 lie on the Extracellular side of the membrane. A helical membrane pass occupies residues Arg199 to Gly224. The Cytoplasmic portion of the chain corresponds to Ile225 to Gln250. Residues Leu251–Val267 traverse the membrane as a helical segment. Residues Thr268–Arg285 lie on the Extracellular side of the membrane. Residues Thr286–Leu307 traverse the membrane as a helical segment. At Arg308–Thr362 the chain is on the cytoplasmic side.

Belongs to the G-protein coupled receptor 1 family.

Its subcellular location is the cell membrane. Receptor for prostaglandin F2-alpha (PGF2-alpha). The activity of this receptor is mediated by G proteins which activate a phosphatidylinositol-calcium second messenger system. Initiates luteolysis in the corpus luteum. In Bos taurus (Bovine), this protein is Prostaglandin F2-alpha receptor (PTGFR).